Here is a 472-residue protein sequence, read N- to C-terminus: Na(+)/H(+) antiporter NhaA (472 aa).

10 consecutive transmembrane segments (helical) span residues 24–44, 66–86, 108–128, 156–176, 196–216, 234–254, 290–310, 312–332, 361–381, and 392–412; these read ISGLIMLGFALTGLVLANLPA, LPIGHWAQDGLLTIFFLTVGL, LCAVGGMIAPPILFLAVTALF, GWAVPTATDIAFSLAVLALFA, LLAIILIAVFFSSINAWYWFI, VPWIAVGIVGILAWIMMFEAG, PFSALLALPIFALFATGVHFE, MSPLLLASPLVIALIVALVVG, MIPAAVACGIGFTVSFLIASL, and ARFGVLVASLIAAAISGVLLS. A disordered region spans residues 422-472; it reads AAAAAADEEDDESIDGDGIGQPSHTTEPTTPTEHPGTLADGTASVEIDFRH. Residues 427-436 show a composition bias toward acidic residues; sequence ADEEDDESID. Residues 445–456 show a composition bias toward low complexity; it reads HTTEPTTPTEHP.

It belongs to the NhaA Na(+)/H(+) (TC 2.A.33) antiporter family.

The protein localises to the cell membrane. The enzyme catalyses Na(+)(in) + 2 H(+)(out) = Na(+)(out) + 2 H(+)(in). Its function is as follows. Na(+)/H(+) antiporter that extrudes sodium in exchange for external protons. The protein is Na(+)/H(+) antiporter NhaA of Bifidobacterium longum (strain NCC 2705).